Reading from the N-terminus, the 292-residue chain is 4-diphosphocytidyl-2-C-methyl-D-erythritol kinase (292 aa).

Lys20 is a catalytic residue. ATP is bound at residue 103–113; it reads PMGGGIGGGSS. Residue Asp145 is part of the active site.

Belongs to the GHMP kinase family. IspE subfamily.

The catalysed reaction is 4-CDP-2-C-methyl-D-erythritol + ATP = 4-CDP-2-C-methyl-D-erythritol 2-phosphate + ADP + H(+). Its pathway is isoprenoid biosynthesis; isopentenyl diphosphate biosynthesis via DXP pathway; isopentenyl diphosphate from 1-deoxy-D-xylulose 5-phosphate: step 3/6. Functionally, catalyzes the phosphorylation of the position 2 hydroxy group of 4-diphosphocytidyl-2C-methyl-D-erythritol. The sequence is that of 4-diphosphocytidyl-2-C-methyl-D-erythritol kinase from Cupriavidus taiwanensis (strain DSM 17343 / BCRC 17206 / CCUG 44338 / CIP 107171 / LMG 19424 / R1) (Ralstonia taiwanensis (strain LMG 19424)).